A 161-amino-acid chain; its full sequence is Probable chemoreceptor glutamine deamidase CheD (161 aa).

Belongs to the CheD family.

The enzyme catalyses L-glutaminyl-[protein] + H2O = L-glutamyl-[protein] + NH4(+). Functionally, probably deamidates glutamine residues to glutamate on methyl-accepting chemotaxis receptors (MCPs), playing an important role in chemotaxis. This chain is Probable chemoreceptor glutamine deamidase CheD, found in Trichlorobacter lovleyi (strain ATCC BAA-1151 / DSM 17278 / SZ) (Geobacter lovleyi).